A 159-amino-acid polypeptide reads, in one-letter code: Ribosomal RNA large subunit methyltransferase H (159 aa).

S-adenosyl-L-methionine-binding positions include L76, G108, and 127–132 (FGLLTL).

This sequence belongs to the RNA methyltransferase RlmH family. In terms of assembly, homodimer.

It is found in the cytoplasm. The catalysed reaction is pseudouridine(1915) in 23S rRNA + S-adenosyl-L-methionine = N(3)-methylpseudouridine(1915) in 23S rRNA + S-adenosyl-L-homocysteine + H(+). Functionally, specifically methylates the pseudouridine at position 1915 (m3Psi1915) in 23S rRNA. The protein is Ribosomal RNA large subunit methyltransferase H of Streptococcus mutans serotype c (strain ATCC 700610 / UA159).